We begin with the raw amino-acid sequence, 195 residues long: Transmembrane protein 239 (195 aa).

Helical transmembrane passes span 105–125 and 145–171; these read LWGL…HALF and HLLP…LLLF.

The protein resides in the membrane. The sequence is that of Transmembrane protein 239 (TMEM239) from Homo sapiens (Human).